Reading from the N-terminus, the 103-residue chain is Pyrimidine/purine nucleoside phosphorylase (103 aa).

It belongs to the nucleoside phosphorylase PpnP family.

The catalysed reaction is a purine D-ribonucleoside + phosphate = a purine nucleobase + alpha-D-ribose 1-phosphate. It carries out the reaction adenosine + phosphate = alpha-D-ribose 1-phosphate + adenine. The enzyme catalyses cytidine + phosphate = cytosine + alpha-D-ribose 1-phosphate. It catalyses the reaction guanosine + phosphate = alpha-D-ribose 1-phosphate + guanine. The catalysed reaction is inosine + phosphate = alpha-D-ribose 1-phosphate + hypoxanthine. It carries out the reaction thymidine + phosphate = 2-deoxy-alpha-D-ribose 1-phosphate + thymine. The enzyme catalyses uridine + phosphate = alpha-D-ribose 1-phosphate + uracil. It catalyses the reaction xanthosine + phosphate = alpha-D-ribose 1-phosphate + xanthine. Functionally, catalyzes the phosphorolysis of diverse nucleosides, yielding D-ribose 1-phosphate and the respective free bases. Can use uridine, adenosine, guanosine, cytidine, thymidine, inosine and xanthosine as substrates. Also catalyzes the reverse reactions. This Shewanella frigidimarina (strain NCIMB 400) protein is Pyrimidine/purine nucleoside phosphorylase.